Consider the following 425-residue polypeptide: Histidine--tRNA ligase (425 aa).

Belongs to the class-II aminoacyl-tRNA synthetase family. As to quaternary structure, homodimer.

It localises to the cytoplasm. The enzyme catalyses tRNA(His) + L-histidine + ATP = L-histidyl-tRNA(His) + AMP + diphosphate + H(+). This Desulforapulum autotrophicum (strain ATCC 43914 / DSM 3382 / VKM B-1955 / HRM2) (Desulfobacterium autotrophicum) protein is Histidine--tRNA ligase.